The primary structure comprises 357 residues: DNA replication and repair protein RecF (357 aa).

30-37 (GANGSGKT) is a binding site for ATP.

Belongs to the RecF family.

Its subcellular location is the cytoplasm. In terms of biological role, the RecF protein is involved in DNA metabolism; it is required for DNA replication and normal SOS inducibility. RecF binds preferentially to single-stranded, linear DNA. It also seems to bind ATP. The protein is DNA replication and repair protein RecF of Citrobacter koseri (strain ATCC BAA-895 / CDC 4225-83 / SGSC4696).